The primary structure comprises 147 residues: Adenylylsulfatase HINT1 (147 aa).

The region spanning 37–147 (IFDKIISKEI…GGRQMNWPPG (111 aa)) is the HIT domain. The Histidine triad motif motif lies at 131–135 (HIHVH). H133 acts as the Tele-AMP-histidine intermediate in catalysis. H135 serves as a coordination point for substrate.

It is found in the peroxisome. The protein resides in the plastid. The protein localises to the chloroplast. It carries out the reaction adenosine 5'-phosphosulfate + H2O = sulfate + AMP + 2 H(+). Its function is as follows. Possesses adenylylsulfatase activity in vitro. This Arabidopsis thaliana (Mouse-ear cress) protein is Adenylylsulfatase HINT1.